Consider the following 295-residue polypeptide: Protease HtpX (295 aa).

2 consecutive transmembrane segments (helical) span residues 4–24 and 41–61; these read ILLF…TLSL and SSLL…SLFI. His147 contributes to the Zn(2+) binding site. Glu148 is a catalytic residue. His151 contacts Zn(2+). Helical transmembrane passes span 158–178 and 199–219; these read VTLA…ARII and VATI…VMWF. Glu224 serves as a coordination point for Zn(2+).

Belongs to the peptidase M48B family. It depends on Zn(2+) as a cofactor.

The protein localises to the cell inner membrane. The chain is Protease HtpX from Pseudomonas putida (strain W619).